Here is a 515-residue protein sequence, read N- to C-terminus: Cytochrome P450 monooxygenase janP (515 aa).

The helical transmembrane segment at 20-36 threads the bilayer; the sequence is GFLWKYAAFMVFIYLLL. Cysteine 456 contributes to the heme binding site. N-linked (GlcNAc...) asparagine glycosylation occurs at asparagine 501.

This sequence belongs to the cytochrome P450 family. Requires heme as cofactor.

It is found in the membrane. The protein operates within secondary metabolite biosynthesis. Its function is as follows. Cytochrome P450 monooxygenase; part of the gene cluster that mediates the biosynthesis of the indole diterpenes janthitremanes such as shearinine K or shearinine A. The geranylgeranyl diphosphate (GGPP) synthase janG catalyzes the first step in janthitremane biosynthesis via conversion of farnesyl pyrophosphate and isopentyl pyrophosphate into geranylgeranyl pyrophosphate (GGPP). Condensation of indole-3-glycerol phosphate with GGPP by the prenyl transferase janC then forms 3-geranylgeranylindole (3-GGI). Epoxidation by the FAD-dependent monooxygenase janM leads to a epoxidized-GGI that is substrate of the terpene cyclase janB for cyclization to yield paspaline. Paspaline is subsequently converted to 13-desoxypaspaline by the cytochrome P450 monooxygenase janP, via beta-PC-M6 in a series of alpha-face oxidations. The cytochrome P450 monooxygenase janQ is proposed to carry out sequential beta-face oxidation steps at C-7 and C-13 of 13-desoxypaspaline to form paspalicine and paspalinine respectively. The indole diterpene prenyltransferase janD may then convert paspalinine into shearinine K which is substrate of janO and/or additional enzymes for oxidation and cyclization to generate shearinine A. The protein is Cytochrome P450 monooxygenase janP of Penicillium janthinellum (Penicillium vitale).